The primary structure comprises 242 residues: Segregation and condensation protein A (242 aa).

The protein belongs to the ScpA family. Component of a cohesin-like complex composed of ScpA, ScpB and the Smc homodimer, in which ScpA and ScpB bind to the head domain of Smc. The presence of the three proteins is required for the association of the complex with DNA.

It is found in the cytoplasm. In terms of biological role, participates in chromosomal partition during cell division. May act via the formation of a condensin-like complex containing Smc and ScpB that pull DNA away from mid-cell into both cell halves. This chain is Segregation and condensation protein A, found in Streptococcus pneumoniae serotype 2 (strain D39 / NCTC 7466).